We begin with the raw amino-acid sequence, 846 residues long: Vinculin (846 aa).

Positions 1–257 (MPVKFHTKTL…VLQLTTTFEE (257 aa)) are interaction with TLN. The stretch at 315–370 (RAKLLAAADELDQILKELEELQAKGLGDSRQARALAHAAAVKLQELEQEIRKALAE) forms a coiled coil. Positions 617–646 (WVPPRPPLPELEEEEEPPELPPPPEDPASL) are disordered.

Belongs to the vinculin/alpha-catenin family. As to quaternary structure, monomer. Interacts with TLN (talin); the interaction facilitates VIN1 binding to F-actin. In terms of tissue distribution, expressed in epithelial tissues, specifically the pinacoderm (outer epithelium) and choanoderm (feeding epithelium) (at protein level). Also detected in migratory cells of the mesohyl (at protein level).

Its subcellular location is the cytoplasm. The protein resides in the cell cortex. It localises to the cell projection. The protein localises to the filopodium. It is found in the cytoskeleton. Its function is as follows. Actin filament (F-actin)-binding protein which may play a role in cell-cell adhesion. This chain is Vinculin, found in Oscarella pearsei (Sponge).